Here is a 123-residue protein sequence, read N- to C-terminus: Protein LLP homolog (123 aa).

Residues 1-21 (MAKSLRSKWKRKMRAEKRKKN) are compositionally biased toward basic residues. 2 disordered regions span residues 1-22 (MAKS…KKNA) and 61-123 (DLDV…KLAW). The segment covering 70 to 89 (ESSKMDTELKRNKKNLRDQH) has biased composition (basic and acidic residues). Residues 100-123 (QQKKLKSQCGKKKGKSKQAKKLAW) are compositionally biased toward basic residues.

The protein belongs to the learning-associated protein family.

The protein localises to the nucleus. It localises to the nucleolus. The protein resides in the chromosome. Its function is as follows. Regulates dendritic and spine growth and synaptic transmission. The polypeptide is Protein LLP homolog (llph) (Xenopus laevis (African clawed frog)).